Here is a 73-residue protein sequence, read N- to C-terminus: uncharacterized protein (73 aa).

This is an uncharacterized protein from Methanocaldococcus jannaschii (strain ATCC 43067 / DSM 2661 / JAL-1 / JCM 10045 / NBRC 100440) (Methanococcus jannaschii).